A 284-amino-acid polypeptide reads, in one-letter code: Tropomyosin Pen a 1.0102 (284 aa).

Residues 1 to 51 form a disordered region; sequence MDAIKKKMQAMKLEKDNAMDRADTLEQQNKEANNRAEKSEEEVHNLQKRMQ. The stretch at 1–273 forms a coiled coil; it reads MDAIKKKMQA…KEKYKSITDE (273 aa). Over residues 12-45 the composition is skewed to basic and acidic residues; sequence KLEKDNAMDRADTLEQQNKEANNRAEKSEEEVHN. IgE-binding stretches follow at residues 43–57, 85–105, 133–153, 187–202, 247–284, 249–260, and 266–281; these read VHNLQKRMQQLENDL, VAALNRRIQLLEEDLERSEER, RSLSDEERMDALENQLKEARF, ESKIVELEEELRVVGN, QKLQKEVDRLEDELVNEKEKYKSITDELDQTFSELSGY, LQKEVDRLEDEL, and KYKSITDELDQTFSEL.

It belongs to the tropomyosin family. In terms of assembly, homodimer.

Its function is as follows. Tropomyosin, in association with the troponin complex, plays a central role in the calcium dependent regulation of muscle contraction. In Penaeus aztecus (Brown shrimp), this protein is Tropomyosin Pen a 1.0102.